Here is a 250-residue protein sequence, read N- to C-terminus: Non-specific acid phosphatase (250 aa).

The N-terminal stretch at 1–20 (MKSRYLLFFLPLIVAKYTSA) is a signal peptide.

It belongs to the class A bacterial acid phosphatase family. As to quaternary structure, homodimer.

The protein resides in the periplasm. It catalyses the reaction a phosphate monoester + H2O = an alcohol + phosphate. This Salmonella typhi protein is Non-specific acid phosphatase (phoN).